Reading from the N-terminus, the 109-residue chain is Large ribosomal subunit protein uL24 (109 aa).

This sequence belongs to the universal ribosomal protein uL24 family. Part of the 50S ribosomal subunit.

Its function is as follows. One of two assembly initiator proteins, it binds directly to the 5'-end of the 23S rRNA, where it nucleates assembly of the 50S subunit. One of the proteins that surrounds the polypeptide exit tunnel on the outside of the subunit. The protein is Large ribosomal subunit protein uL24 of Rickettsia canadensis (strain McKiel).